Reading from the N-terminus, the 55-residue chain is Large ribosomal subunit protein bL33 (55 aa).

Belongs to the bacterial ribosomal protein bL33 family.

The chain is Large ribosomal subunit protein bL33 from Yersinia pestis (strain Pestoides F).